Here is a 547-residue protein sequence, read N- to C-terminus: Cytochrome P450 monooxygenase 128 (547 aa).

A helical membrane pass occupies residues 9–25 (IPWAAGATLLAWAAYKI). N-linked (GlcNAc...) asparagine glycans are attached at residues Asn-336 and Asn-438. Cys-483 contributes to the heme binding site.

It belongs to the cytochrome P450 family. It depends on heme as a cofactor.

The protein resides in the membrane. Its pathway is secondary metabolite biosynthesis. Cytochrome P450 monooxygenase that is able to use 7-ethoxycoumarin and testosterone as substrates for oxidation. The chain is Cytochrome P450 monooxygenase 128 from Postia placenta (strain ATCC 44394 / Madison 698-R) (Brown rot fungus).